A 294-amino-acid polypeptide reads, in one-letter code: MAASIIDGKVIAADLRARVAGEVTRIKRDHGLTPGLAVVLVGNDPASEVYVRNKHKQTQAAGMASFEHMLPADVAQADVLALIAELNADPAVHGILVQLPLPKGLDTEAIIAAIDPAKDVDGLHPHNAGRLAGGLSALSPCTPLGCIILTKSVHASLEGLDAIVIGRSNLVGRPLVQLLLNENATVTIAHSRSRNLPELCRRADLVYAAVGRAEMVRGDWLKPGATVIDVGITRVPAAEGKTRLIGDVAFDEAMQVAGAVTPVPGGVGQMTVACLLVNTLRAACAIEGLSAPGV.

Residues 166 to 168 (GRS), S191, and I232 contribute to the NADP(+) site.

The protein belongs to the tetrahydrofolate dehydrogenase/cyclohydrolase family. As to quaternary structure, homodimer.

It catalyses the reaction (6R)-5,10-methylene-5,6,7,8-tetrahydrofolate + NADP(+) = (6R)-5,10-methenyltetrahydrofolate + NADPH. The catalysed reaction is (6R)-5,10-methenyltetrahydrofolate + H2O = (6R)-10-formyltetrahydrofolate + H(+). The protein operates within one-carbon metabolism; tetrahydrofolate interconversion. Functionally, catalyzes the oxidation of 5,10-methylenetetrahydrofolate to 5,10-methenyltetrahydrofolate and then the hydrolysis of 5,10-methenyltetrahydrofolate to 10-formyltetrahydrofolate. The chain is Bifunctional protein FolD from Nitrobacter winogradskyi (strain ATCC 25391 / DSM 10237 / CIP 104748 / NCIMB 11846 / Nb-255).